A 193-amino-acid polypeptide reads, in one-letter code: Acyl carrier protein phosphodiesterase (193 aa).

It belongs to the AcpH family.

It carries out the reaction holo-[ACP] + H2O = apo-[ACP] + (R)-4'-phosphopantetheine + H(+). Its function is as follows. Converts holo-ACP to apo-ACP by hydrolytic cleavage of the phosphopantetheine prosthetic group from ACP. The protein is Acyl carrier protein phosphodiesterase of Salmonella agona (strain SL483).